The primary structure comprises 743 residues: Fork head transcription factor 1 (743 aa).

The region spanning 39–94 (VTMGRKASNSSDCDVHLGDTKAISRQHAKIFYSFPNQRFEISVMGKNGAFVDGEFV) is the FHA domain. 3 disordered regions span residues 214 to 291 (QPPK…ATQK), 411 to 450 (GISA…LQNG), and 529 to 743 (QMQG…SSYT). The segment covering 221-230 (VSPSSIQRLS) has biased composition (polar residues). The fork-head DNA-binding region spans 291-385 (KPNLSYANLI…EGNFFRRTKK (95 aa)). Positions 434–443 (SRGENVEDRP) are enriched in basic and acidic residues. Residues 529–539 (QMQGPQQVQQQ) are compositionally biased toward low complexity. Positions 562 to 576 (NITSPSPSISVTQRP) are enriched in polar residues. Residues 614–624 (SAGPSSVRSSS) show a composition bias toward low complexity. Composition is skewed to polar residues over residues 625-643 (YNST…QNLH), 670-686 (TGNQ…ASSF), and 695-726 (ENGS…NSSD).

It is found in the nucleus. Its function is as follows. Acts as a transcriptional activator for ribosomal protein genes (RPG) that contain a HomolE UAS (upstream activating sequence) in addition to a HomolD promoter element; HomolD plays the role of a TATA box in RPG promoters that do not contain a canonical TATA sequence. Binds to HomolE elements with consensus sequence 3'-ACCCTACCCT-5' (or its inverted form AGGGTAGGGT). The chain is Fork head transcription factor 1 from Schizosaccharomyces pombe (strain 972 / ATCC 24843) (Fission yeast).